Reading from the N-terminus, the 904-residue chain is Pentatricopeptide repeat-containing protein At4g30825, chloroplastic (904 aa).

The N-terminal 61 residues, 1–61, are a transit peptide targeting the chloroplast; the sequence is MGSLRFSIPL…SSTRVLDKIR (61 aa). A disordered region spans residues 75–94; it reads NSASAAPVERSRSSKLSGDQ. PPR repeat units follow at residues 173 to 203, 209 to 243, 244 to 274, 278 to 312, 313 to 347, 348 to 382, 383 to 417, 418 to 452, 487 to 521, 522 to 553, 557 to 591, 592 to 622, 628 to 662, 663 to 697, 698 to 732, 733 to 766, 767 to 801, 802 to 836, 837 to 871, and 872 to 904; these read NFVA…LCGF, SYQV…GVRP, NVAT…MRKF, CESA…RVRL, KLEN…GFSP, NIIA…GLEP, DETS…GYKP, NSFN…GCQY, NQTS…DSAF, ESHL…MESD, NLHI…GVVL, DRIG…MDEQ, DVYL…GIHW, NQEM…GFTP, NTVT…GVVD, VISY…GFSV, SLEA…TSGP, DHYT…GLGP, DLCS…NIIP, and DKVT…QMGI.

This sequence belongs to the PPR family. P subfamily.

The protein resides in the plastid. The protein localises to the chloroplast. The polypeptide is Pentatricopeptide repeat-containing protein At4g30825, chloroplastic (Arabidopsis thaliana (Mouse-ear cress)).